The primary structure comprises 328 residues: 4-hydroxy-3-methylbut-2-enyl diphosphate reductase (328 aa).

Cysteine 24 is a binding site for [4Fe-4S] cluster. Histidine 55 and histidine 88 together coordinate (2E)-4-hydroxy-3-methylbut-2-enyl diphosphate. Dimethylallyl diphosphate is bound by residues histidine 55 and histidine 88. Residues histidine 55 and histidine 88 each contribute to the isopentenyl diphosphate site. Residue cysteine 110 participates in [4Fe-4S] cluster binding. Histidine 138 contributes to the (2E)-4-hydroxy-3-methylbut-2-enyl diphosphate binding site. Histidine 138 serves as a coordination point for dimethylallyl diphosphate. Histidine 138 contacts isopentenyl diphosphate. Residue glutamate 140 is the Proton donor of the active site. Threonine 178 provides a ligand contact to (2E)-4-hydroxy-3-methylbut-2-enyl diphosphate. Cysteine 208 serves as a coordination point for [4Fe-4S] cluster. Residues serine 236, serine 237, asparagine 238, and serine 279 each coordinate (2E)-4-hydroxy-3-methylbut-2-enyl diphosphate. 4 residues coordinate dimethylallyl diphosphate: serine 236, serine 237, asparagine 238, and serine 279. The isopentenyl diphosphate site is built by serine 236, serine 237, asparagine 238, and serine 279.

This sequence belongs to the IspH family. It depends on [4Fe-4S] cluster as a cofactor.

The catalysed reaction is isopentenyl diphosphate + 2 oxidized [2Fe-2S]-[ferredoxin] + H2O = (2E)-4-hydroxy-3-methylbut-2-enyl diphosphate + 2 reduced [2Fe-2S]-[ferredoxin] + 2 H(+). It carries out the reaction dimethylallyl diphosphate + 2 oxidized [2Fe-2S]-[ferredoxin] + H2O = (2E)-4-hydroxy-3-methylbut-2-enyl diphosphate + 2 reduced [2Fe-2S]-[ferredoxin] + 2 H(+). It participates in isoprenoid biosynthesis; dimethylallyl diphosphate biosynthesis; dimethylallyl diphosphate from (2E)-4-hydroxy-3-methylbutenyl diphosphate: step 1/1. Its pathway is isoprenoid biosynthesis; isopentenyl diphosphate biosynthesis via DXP pathway; isopentenyl diphosphate from 1-deoxy-D-xylulose 5-phosphate: step 6/6. In terms of biological role, catalyzes the conversion of 1-hydroxy-2-methyl-2-(E)-butenyl 4-diphosphate (HMBPP) into a mixture of isopentenyl diphosphate (IPP) and dimethylallyl diphosphate (DMAPP). Acts in the terminal step of the DOXP/MEP pathway for isoprenoid precursor biosynthesis. This is 4-hydroxy-3-methylbut-2-enyl diphosphate reductase from Ehrlichia ruminantium (strain Welgevonden).